A 625-amino-acid polypeptide reads, in one-letter code: DELLA protein SLR1 (625 aa).

The segment at 1–34 (MKREYQEAGGSSGGGSSADMGSCKDKVMAGAAGE) is disordered. Positions 39 to 43 (DELLA) match the DELLA motif motif. A disordered region spans residues 167–209 (TADPSAADSARDTKRMRTGGGSTSSSSSSSSSLGGGASRGSVV). The segment covering 189–198 (TSSSSSSSSS) has biased composition (low complexity). In terms of domain architecture, GRAS spans 232-621 (VDTQEAGIRL…RPLIATSAWR (390 aa)). The leucine repeat I (LRI) stretch occupies residues 239-294 (IRLVHALLACAEAVQQENFAAAEALVKQIPTLAASQGGAMRKVAAYFGEALARRVY). The interval 241 to 278 (LVHALLACAEAVQQENFAAAEALVKQIPTLAASQGGAM) is required for possible homodimerization. Positions 246 to 250 (LACAE) match the LxCxE motif motif. The interval 313–378 (HAHFYESCPY…GGPPSFRLTG (66 aa)) is VHIID. The VHIID signature appears at 344–348 (VHVVD). Residues 392–431 (QVGWKLAQFAHTIRVDFQYRGLVAATLADLEPFMLQPEGE) are leucine repeat II (LRII). Residues 441 to 542 (IAVNSVFELH…EVYLGRQICN (102 aa)) form a PFYRE region. An LXXLL motif motif is present at residues 449 to 453 (LHRLL). The interval 545-621 (ACEGAERTER…RPLIATSAWR (77 aa)) is SAW.

Belongs to the GRAS family. DELLA subfamily. May be a homodimer. Interacts directly with the GID2 component of the SCF(GID2) complex. Interacts with GID1 in a GA-dependent manner, probably leading to its interaction with GID2 and its subsequent degradation. Interacts with D14 and GID1 in an strigolactone-dependent manner. Interacts with HD16/EL1. In terms of processing, phosphorylated on Ser/Thr residues in the N-terminal part. Both phosphorylated and unphosphorylated forms are degraded upon GA treatment, suggesting that phosphorylation does not trigger ubiquitination. Phosphorylated by HD16/EL1. Phosphorylation enhances its stability. Ubiquitinated. Upon GA application it is ubiquitinated by the SCF(GID2) complex, leading to its subsequent degradation. Expressed in nodes, internodes, leaf sheats of young seedlings and ears of adult plants. Weakly expressed in leaf blade and root.

It localises to the nucleus. Probable transcriptional regulator that acts as a repressor of the gibberellin (GA) signaling pathway. Probably acts by participating in large multiprotein complexes that repress transcription of GA-inducible genes. Upon GA application, it is degraded by the proteasome, allowing the GA signaling pathway. In contrast, its overexpression prevents the GA signaling pathway and induces a dwarf phenotype. The protein is DELLA protein SLR1 of Oryza sativa subsp. japonica (Rice).